The primary structure comprises 111 residues: Large ribosomal subunit protein uL22 (111 aa).

The protein belongs to the universal ribosomal protein uL22 family. In terms of assembly, part of the 50S ribosomal subunit.

Functionally, this protein binds specifically to 23S rRNA; its binding is stimulated by other ribosomal proteins, e.g. L4, L17, and L20. It is important during the early stages of 50S assembly. It makes multiple contacts with different domains of the 23S rRNA in the assembled 50S subunit and ribosome. In terms of biological role, the globular domain of the protein is located near the polypeptide exit tunnel on the outside of the subunit, while an extended beta-hairpin is found that lines the wall of the exit tunnel in the center of the 70S ribosome. The chain is Large ribosomal subunit protein uL22 from Citrifermentans bemidjiense (strain ATCC BAA-1014 / DSM 16622 / JCM 12645 / Bem) (Geobacter bemidjiensis).